The following is a 123-amino-acid chain: Keratin-associated protein 2-2 (123 aa).

The tract at residues 5–112 (CCGSTFSSLS…SVQSPCGQPT (108 aa)) is 11 X 5 AA repeats of C-C-[CDPQRWG]-[APRS]-[CIPSTVD].

The protein belongs to the KRTAP type 2 family. As to quaternary structure, interacts with hair keratins.

In terms of biological role, in the hair cortex, hair keratin intermediate filaments are embedded in an interfilamentous matrix, consisting of hair keratin-associated proteins (KRTAP), which are essential for the formation of a rigid and resistant hair shaft through their extensive disulfide bond cross-linking with abundant cysteine residues of hair keratins. The matrix proteins include the high-sulfur and high-glycine-tyrosine keratins. In Homo sapiens (Human), this protein is Keratin-associated protein 2-2 (KRTAP2-2).